A 434-amino-acid polypeptide reads, in one-letter code: MDYLDLGPYSSASGTVRLPGSKSISNRVLLLAALAEGETTITNLLDSDDTRVMLDALGKLGVKLARDGDTCVVTGTRGAFTAKTADLFLGNAGTAVRPLTAALAVNGGDYRVHGVPRMHERPIGDLVDGLRQIGAQIDYELNEGYPPLRIKPATISVDAPIRVRGDVSSQFLTALLMTLPLVKAKDGRTVVEVDGELISKPYIDITIRLMARFGVTVERDGWQRFVVPAGVRYKSPGRIMVEGDASSASYFLAAGALGGGPLRVEGVGRASIQGDVGFANALMQMGANVTMGDDWIDVRGIGHDHGKLEPIDMDFNLIPDAAMTIAVAALFANGTSTLRNIASWRVKETDRIAAMATELRKVGAIVEEGPDYLVVTPPEKLTPNAAIDTYDDHRMAMCFSLVSLGGVPVRINDPKCVGKTFPDYFDRFAALAKA.

The 3-phosphoshikimate site is built by K22, S23, and R27. K22 contributes to the phosphoenolpyruvate binding site. G93 and R121 together coordinate phosphoenolpyruvate. 3-phosphoshikimate contacts are provided by S168, S169, Q170, S199, D320, and K347. Q170 lines the phosphoenolpyruvate pocket. D320 functions as the Proton acceptor in the catalytic mechanism. Positions 351, 394, and 419 each coordinate phosphoenolpyruvate.

Belongs to the EPSP synthase family. In terms of assembly, monomer.

It is found in the cytoplasm. It catalyses the reaction 3-phosphoshikimate + phosphoenolpyruvate = 5-O-(1-carboxyvinyl)-3-phosphoshikimate + phosphate. Its pathway is metabolic intermediate biosynthesis; chorismate biosynthesis; chorismate from D-erythrose 4-phosphate and phosphoenolpyruvate: step 6/7. Its function is as follows. Catalyzes the transfer of the enolpyruvyl moiety of phosphoenolpyruvate (PEP) to the 5-hydroxyl of shikimate-3-phosphate (S3P) to produce enolpyruvyl shikimate-3-phosphate and inorganic phosphate. The chain is 3-phosphoshikimate 1-carboxyvinyltransferase from Burkholderia orbicola (strain MC0-3).